Here is a 209-residue protein sequence, read N- to C-terminus: GTP cyclohydrolase-2 (209 aa).

Residue 49-53 participates in GTP binding; sequence RIHSE. Positions 54, 65, and 67 each coordinate Zn(2+). GTP-binding positions include Q70, 92 to 94, and T114; that span reads EGR. Residue D126 is the Proton acceptor of the active site. R128 functions as the Nucleophile in the catalytic mechanism. 2 residues coordinate GTP: T149 and K154.

Belongs to the GTP cyclohydrolase II family. Zn(2+) serves as cofactor.

It catalyses the reaction GTP + 4 H2O = 2,5-diamino-6-hydroxy-4-(5-phosphoribosylamino)-pyrimidine + formate + 2 phosphate + 3 H(+). Its pathway is cofactor biosynthesis; riboflavin biosynthesis; 5-amino-6-(D-ribitylamino)uracil from GTP: step 1/4. Functionally, catalyzes the conversion of GTP to 2,5-diamino-6-ribosylamino-4(3H)-pyrimidinone 5'-phosphate (DARP), formate and pyrophosphate. This is GTP cyclohydrolase-2 from Shewanella halifaxensis (strain HAW-EB4).